Reading from the N-terminus, the 97-residue chain is Putative mitochondrial import inner membrane translocase subunit Tim8 A-B (97 aa).

The Twin CX3C motif motif lies at 43 to 66 (CWEKCMDKPGPRLDGRAELCLVNC). Intrachain disulfides connect cysteine 43–cysteine 66 and cysteine 47–cysteine 62.

This sequence belongs to the small Tim family. As to quaternary structure, heterohexamer; possibly composed of 3 copies of TIMM8AB and 3 copies of TIMM13.

It localises to the mitochondrion inner membrane. Its function is as follows. Putative mitochondrial intermembrane chaperone that participates in the import and insertion of some multi-pass transmembrane proteins into the mitochondrial inner membrane. Also required for the transfer of beta-barrel precursors from the TOM complex to the sorting and assembly machinery (SAM complex) of the outer membrane. Acts as a chaperone-like protein that protects the hydrophobic precursors from aggregation and guide them through the mitochondrial intermembrane space. This Mus musculus (Mouse) protein is Putative mitochondrial import inner membrane translocase subunit Tim8 A-B (Timm8a2).